A 267-amino-acid polypeptide reads, in one-letter code: O-methyltransferase (267 aa).

Positions 100 and 145 each coordinate S-adenosyl-L-methionine.

Belongs to the methyltransferase superfamily.

It participates in antifungal biosynthesis. O-methyltransferase; part of the gene cluster that mediates the biosynthesis of the tetrahydropyranyl antifungal agent lanomycin that acts as an inhibitor of CYP51 and blocks the ergosterol biosynthesis. The biosynthesis probably begins with the formation of an hexaketide, followed by methionine mediated alkylation of C-2 and C-6, and methylation of the reduced C-3 oxygen, pyran forming reductive ring closure, oxygenation of C-4, beta-keto reduction, enoyl reduction and dehydration of the remaining oxygens, and finally, acylation with glycine to complete the biosynthesis. This Pyrenophora dematioidea (Helminthosporium dematioideum) protein is O-methyltransferase.